The chain runs to 983 residues: Protein translocase subunit SecA (983 aa).

Residues glutamine 83, 101–105, and aspartate 489 each bind ATP; that span reads GEGKT. The tract at residues 948–983 is disordered; that stretch reads ISSEEENNNEKTNININEDLERTKGEAQQTAKNPNE. Residues 973–983 are compositionally biased toward polar residues; sequence EAQQTAKNPNE.

The protein belongs to the SecA family. In terms of assembly, monomer and homodimer. Part of the essential Sec protein translocation apparatus which comprises SecA, SecYEG and auxiliary proteins SecDF. Other proteins may also be involved.

The protein resides in the cell membrane. The protein localises to the cytoplasm. The enzyme catalyses ATP + H2O + cellular proteinSide 1 = ADP + phosphate + cellular proteinSide 2.. In terms of biological role, part of the Sec protein translocase complex. Interacts with the SecYEG preprotein conducting channel. Has a central role in coupling the hydrolysis of ATP to the transfer of proteins into and across the cell membrane, serving as an ATP-driven molecular motor driving the stepwise translocation of polypeptide chains across the membrane. The polypeptide is Protein translocase subunit SecA (Mesomycoplasma hyopneumoniae (strain 7448) (Mycoplasma hyopneumoniae)).